The chain runs to 773 residues: MLSLIEQIKSGKLWDFPGGIHPFENKHQSNRQPIINASIPNELVLPLKQHIGKAGDLLVKVGDRVLKGQPLTQYTSTFMLPIHAPTSGVISAIEPRTVAHPSGLSELCIVLTPDQQEEWFELQPQPDFQQLTPETLLELIRQAGISGMGGAGFPTAKKLQSGLSRTEILIINAAECEPYITADDVLMRQYAHEIIQGIEIVEHILKPKLTIIGIEDNKPEAVAALQQAAQDKPMVIRVIPTKYPSGGEKQLIKILTNLEVPKGGIPADIGLMVQNVGSLQAIARAIVHGEPLIRRVVTLTGDCFRKPRNVWALLGTPVQALLNEFGYKADKKLPRLIMGGPMMGFTLPHAQVPITKTANCILAPTRNELTSSDNEMACIRCGQCAEACPVSLLPQQLQWHAKAEEFDKCEELDLKDCIECGACAYVCPSEIPLVQYYRQAKAEIRTRSLEAEAAERAKARFEEKKARMERDKAERENRFKQAAEDRRKEMQQQGGSDAIAAAIERVKAQKAQLEPTDNSVKPAIAAAIARAKAKQAEAAQSGASEPDNSEMAKLREERKRQARERKAQKGEVTEASTSDGADDKKSAVAAAIARAKARKAEQQETESAAQPAQATPSSDDADPKKAAVAAAIARAKARKAEQGTESTAQPAQATPSSDEADPKKAAVAAAIARAKARKAEQQETESTAQPAQATPSSDDADPKKAAVAAAIARAKARKAEQQETKSTAQPEQATPSSDDADPKKAAVAAAIARAKARKAAQQSSSNLNAEEKD.

4Fe-4S ferredoxin-type domains are found at residues 368 to 398 and 408 to 437; these read ELTS…QQLQ and KCEE…VQYY. [4Fe-4S] cluster contacts are provided by cysteine 378, cysteine 381, cysteine 384, cysteine 388, cysteine 417, cysteine 420, cysteine 423, and cysteine 427. Basic and acidic residues predominate over residues 460-490; it reads RFEEKKARMERDKAERENRFKQAAEDRRKEM. 2 disordered regions span residues 460 to 496 and 533 to 773; these read RFEE…QGGS and AKQA…EEKD. Over residues 533–545 the composition is skewed to low complexity; sequence AKQAEAAQSGASE. Over residues 550 to 572 the composition is skewed to basic and acidic residues; sequence EMAKLREERKRQARERKAQKGEV. Residues 605 to 618 are compositionally biased toward low complexity; the sequence is TESAAQPAQATPSS. Composition is skewed to polar residues over residues 643-657, 684-697, 724-737, and 761-773; these read GTES…TPSS, TEST…TPSS, TKST…TPSS, and QQSS…EEKD.

The protein belongs to the 4Fe4S bacterial-type ferredoxin family. RnfC subfamily. In terms of assembly, the complex is composed of six subunits: RnfA, RnfB, RnfC, RnfD, RnfE and RnfG. [4Fe-4S] cluster serves as cofactor.

It is found in the cell inner membrane. Its function is as follows. Part of a membrane-bound complex that couples electron transfer with translocation of ions across the membrane. In Vibrio cholerae serotype O1 (strain ATCC 39541 / Classical Ogawa 395 / O395), this protein is Ion-translocating oxidoreductase complex subunit C.